We begin with the raw amino-acid sequence, 241 residues long: Phosphoadenosine 5'-phosphosulfate reductase (241 aa).

Cysteine 235 (nucleophile; cysteine thiosulfonate intermediate) is an active-site residue.

The protein belongs to the PAPS reductase family. CysH subfamily.

It is found in the cytoplasm. It carries out the reaction [thioredoxin]-disulfide + sulfite + adenosine 3',5'-bisphosphate + 2 H(+) = [thioredoxin]-dithiol + 3'-phosphoadenylyl sulfate. Its pathway is sulfur metabolism; hydrogen sulfide biosynthesis; sulfite from sulfate: step 3/3. Functionally, catalyzes the formation of sulfite from phosphoadenosine 5'-phosphosulfate (PAPS) using thioredoxin as an electron donor. This is Phosphoadenosine 5'-phosphosulfate reductase from Xanthomonas euvesicatoria pv. vesicatoria (strain 85-10) (Xanthomonas campestris pv. vesicatoria).